The following is a 77-amino-acid chain: MPSKKESYESMIKELEKIVSSMENEELPLEEAMKNYEDGVKLCDKLYKILNKAEGKIKLLTENGEEEFKKAGDSYEQ.

The protein belongs to the XseB family. As to quaternary structure, heterooligomer composed of large and small subunits.

It is found in the cytoplasm. It carries out the reaction Exonucleolytic cleavage in either 5'- to 3'- or 3'- to 5'-direction to yield nucleoside 5'-phosphates.. Functionally, bidirectionally degrades single-stranded DNA into large acid-insoluble oligonucleotides, which are then degraded further into small acid-soluble oligonucleotides. In Clostridium acetobutylicum (strain ATCC 824 / DSM 792 / JCM 1419 / IAM 19013 / LMG 5710 / NBRC 13948 / NRRL B-527 / VKM B-1787 / 2291 / W), this protein is Exodeoxyribonuclease 7 small subunit.